Here is a 289-residue protein sequence, read N- to C-terminus: Syntaxin-3 (289 aa).

Residues 1–263 lie on the Cytoplasmic side of the membrane; the sequence is MKDRLEQLKA…MKYQGQARKK (263 aa). The stretch at 32–111 forms a coiled coil; that stretch reads MDEFFSEIEE…IEEDEVRSSA (80 aa). Residues 191–253 enclose the t-SNARE coiled-coil homology domain; sequence LSEIEGRHKD…EKARDETKRA (63 aa). Residues 264–284 form a helical; Anchor for type IV membrane protein membrane-spanning segment; that stretch reads LIIIIVIVVVLLGILALIIGL. Topologically, residues 285 to 289 are extracellular; sequence SVGLK.

The protein belongs to the syntaxin family. Interacts with REEP6. Interacts with PRPH2 in rod and cone photoreceptors. Interacts with ROM1. Interacts with SNAP25. Interacts with VAMP2. Heart, spleen, lung and kidney.

It is found in the membrane. Functionally, potentially involved in docking of synaptic vesicles at presynaptic active zones. Apical receptor involved in membrane fusion of apical vesicles. Essential for survival of retinal photoreceetors. This chain is Syntaxin-3 (Stx3), found in Rattus norvegicus (Rat).